Here is a 655-residue protein sequence, read N- to C-terminus: p-hydroxybenzoic acid efflux pump subunit AaeB (655 aa).

A run of 11 helical transmembrane segments spans residues 13-33 (FAVKLATAIVLALFVGFHFQL), 38-58 (WAVLTAAIVAAGPAFAAGGEP), 69-89 (LRIIGTFIGCIAGLVIIIAMI), 93-113 (LLMILVCCIWAGFCTWISSLV), 121-141 (WGLAGYTALIIVITIQPEPLL), 152-172 (EIVIGIVCAIMADLLFSPRSI), 370-390 (LFWLWTGWTSGSGAMVMIAVV), 407-427 (FIYGTLAALPLGLLYFLVIIP), 431-451 (QSMLLLCISLAVLGFFLGIEV), 459-479 (MGALASTINIIVLDNPMTFHF), and 482-502 (FLDSALGQIVGCVLAFTVILL).

This sequence belongs to the aromatic acid exporter ArAE (TC 2.A.85) family.

The protein localises to the cell inner membrane. Functionally, forms an efflux pump with AaeA. Could function as a metabolic relief valve, allowing to eliminate certain compounds when they accumulate to high levels in the cell. This is p-hydroxybenzoic acid efflux pump subunit AaeB from Escherichia coli O7:K1 (strain IAI39 / ExPEC).